Consider the following 207-residue polypeptide: LexA repressor (207 aa).

Residues 28 to 48 (RAEIAQKLGFKSANAAEEHLK) constitute a DNA-binding region (H-T-H motif). Active-site for autocatalytic cleavage activity residues include Ser-124 and Lys-161.

The protein belongs to the peptidase S24 family. As to quaternary structure, homodimer.

The enzyme catalyses Hydrolysis of Ala-|-Gly bond in repressor LexA.. Represses a number of genes involved in the response to DNA damage (SOS response), including recA and lexA. In the presence of single-stranded DNA, RecA interacts with LexA causing an autocatalytic cleavage which disrupts the DNA-binding part of LexA, leading to derepression of the SOS regulon and eventually DNA repair. This Aeromonas hydrophila subsp. hydrophila (strain ATCC 7966 / DSM 30187 / BCRC 13018 / CCUG 14551 / JCM 1027 / KCTC 2358 / NCIMB 9240 / NCTC 8049) protein is LexA repressor.